A 192-amino-acid polypeptide reads, in one-letter code: Probable GTP-binding protein EngB (192 aa).

In terms of domain architecture, EngB-type G spans 22-192 (GRPEIVFVGR…LLASIDTFTQ (171 aa)). Residues 30 to 37 (GRSNVGKS), 57 to 61 (GKTRL), 75 to 78 (DLPG), 142 to 145 (TKWD), and 172 to 174 (YSS) each bind GTP. Residues S37 and T59 each coordinate Mg(2+).

It belongs to the TRAFAC class TrmE-Era-EngA-EngB-Septin-like GTPase superfamily. EngB GTPase family. Mg(2+) is required as a cofactor.

Functionally, necessary for normal cell division and for the maintenance of normal septation. This chain is Probable GTP-binding protein EngB, found in Chlorobaculum tepidum (strain ATCC 49652 / DSM 12025 / NBRC 103806 / TLS) (Chlorobium tepidum).